The following is a 441-amino-acid chain: MQNDVLARWEQVLIRLEKQVNKHSFETWLTKCKPVAFYDNTIIIEVPDHFSKSWLADRYAPIIKQAYESIMHQEISLQFILAGQEVDQPKPKERSSEETYINILNPRYTFDTFVVGNSNRFAHAASLAVAESPAKAYNPLFIYGGVGLGKTHLMHAIGHYILENNQNLKVAYVTSEKFTNELINSIRDDQTVEFRNKYRSMDILLIDDIQFLEKKERTQEEFFHTFNTLYEANKQIIISSDRPPKEIATLEDRLRSRFEWGLITDMQSPDYETRVAILRKKAQLEAIKNIPDETIAYIADKIQSNIRELEGALIRVSAFSSLEQRDATPQLAAEVLKDVIAPSKPKIITTPLIMQTVADFYGLRIEDLKAKKRTRSVAFPRQVAMYLARELTDLSLPKIGDEFGGRDHTTVLHACDKITTDLSSDPVLQETIKELKKRIGE.

The tract at residues 1-80 (MQNDVLARWE…MHQEISLQFI (80 aa)) is domain I, interacts with DnaA modulators. A domain II region spans residues 80–102 (ILAGQEVDQPKPKERSSEETYIN). Positions 103–320 (ILNPRYTFDT…GALIRVSAFS (218 aa)) are domain III, AAA+ region. Residues glycine 147, glycine 149, lysine 150, and threonine 151 each contribute to the ATP site. Positions 321–441 (SLEQRDATPQ…IKELKKRIGE (121 aa)) are domain IV, binds dsDNA.

It belongs to the DnaA family. As to quaternary structure, oligomerizes as a right-handed, spiral filament on DNA at oriC.

Its subcellular location is the cytoplasm. Plays an essential role in the initiation and regulation of chromosomal replication. ATP-DnaA binds to the origin of replication (oriC) to initiate formation of the DNA replication initiation complex once per cell cycle. Binds the DnaA box (a 9 base pair repeat at the origin) and separates the double-stranded (ds)DNA. Forms a right-handed helical filament on oriC DNA; dsDNA binds to the exterior of the filament while single-stranded (ss)DNA is stabiized in the filament's interior. The ATP-DnaA-oriC complex binds and stabilizes one strand of the AT-rich DNA unwinding element (DUE), permitting loading of DNA polymerase. After initiation quickly degrades to an ADP-DnaA complex that is not apt for DNA replication. Binds acidic phospholipids. The chain is Chromosomal replication initiator protein DnaA from Desulforamulus reducens (strain ATCC BAA-1160 / DSM 100696 / MI-1) (Desulfotomaculum reducens).